Here is a 187-residue protein sequence, read N- to C-terminus: UPF0200 protein APE_1753.1 (187 aa).

13–20 contributes to the ATP binding site; that stretch reads GLPGSGKS.

The protein belongs to the UPF0200 family.

The polypeptide is UPF0200 protein APE_1753.1 (Aeropyrum pernix (strain ATCC 700893 / DSM 11879 / JCM 9820 / NBRC 100138 / K1)).